The primary structure comprises 523 residues: 2-isopropylmalate synthase (523 aa).

Residues 5–267 enclose the Pyruvate carboxyltransferase domain; it reads VIIFDTTLRD…HTAINHQEIW (263 aa). The Mn(2+) site is built by D14, H202, H204, and N238. The segment at 392–523 is regulatory domain; the sequence is RLDYFSVQSG…QHNENNKETV (132 aa).

This sequence belongs to the alpha-IPM synthase/homocitrate synthase family. LeuA type 1 subfamily. Homodimer. Mn(2+) serves as cofactor.

The protein resides in the cytoplasm. It carries out the reaction 3-methyl-2-oxobutanoate + acetyl-CoA + H2O = (2S)-2-isopropylmalate + CoA + H(+). It functions in the pathway amino-acid biosynthesis; L-leucine biosynthesis; L-leucine from 3-methyl-2-oxobutanoate: step 1/4. Functionally, catalyzes the condensation of the acetyl group of acetyl-CoA with 3-methyl-2-oxobutanoate (2-ketoisovalerate) to form 3-carboxy-3-hydroxy-4-methylpentanoate (2-isopropylmalate). This Escherichia coli O127:H6 (strain E2348/69 / EPEC) protein is 2-isopropylmalate synthase.